A 561-amino-acid polypeptide reads, in one-letter code: Sperm-tail PG-rich repeat-containing protein 2 (561 aa).

STPGR repeat units follow at residues 21 to 34 (VGPG…PKQQ), 63 to 72 (PGPAHYNVSQ), and 97 to 104 (GPGPGSYN). A disordered region spans residues 123-143 (PAVSRNIDIPSIPSSGKSHGY). 7 STPGR repeats span residues 164-191 (GPAY…NATG), 200-210 (GPGPGQYDIIQ), 250-285 (PGPG…TERF), 292-299 (TPAPGTYN), 334-367 (LPGP…FGSS), 421-438 (LPAP…MSQV), and 471-481 (GPGPATYSPVL).

This chain is Sperm-tail PG-rich repeat-containing protein 2 (Stpg2), found in Mus musculus (Mouse).